Here is a 313-residue protein sequence, read N- to C-terminus: Ribosomal RNA small subunit methyltransferase H (313 aa).

S-adenosyl-L-methionine contacts are provided by residues 33–35 (AGH), D53, F82, D103, and Q110.

It belongs to the methyltransferase superfamily. RsmH family.

The protein resides in the cytoplasm. It carries out the reaction cytidine(1402) in 16S rRNA + S-adenosyl-L-methionine = N(4)-methylcytidine(1402) in 16S rRNA + S-adenosyl-L-homocysteine + H(+). Its function is as follows. Specifically methylates the N4 position of cytidine in position 1402 (C1402) of 16S rRNA. The sequence is that of Ribosomal RNA small subunit methyltransferase H from Ruminiclostridium cellulolyticum (strain ATCC 35319 / DSM 5812 / JCM 6584 / H10) (Clostridium cellulolyticum).